The sequence spans 397 residues: 1-deoxy-D-xylulose 5-phosphate reductoisomerase (397 aa).

Residues threonine 17, glycine 18, serine 19, isoleucine 20, asparagine 47, and asparagine 130 each contribute to the NADPH site. Position 131 (lysine 131) interacts with 1-deoxy-D-xylulose 5-phosphate. Glutamate 132 is a binding site for NADPH. Aspartate 156 contributes to the Mn(2+) binding site. Residues serine 157, glutamate 158, serine 182, and histidine 205 each coordinate 1-deoxy-D-xylulose 5-phosphate. A Mn(2+)-binding site is contributed by glutamate 158. An NADPH-binding site is contributed by glycine 211. Residues serine 218, asparagine 223, lysine 224, and glutamate 227 each coordinate 1-deoxy-D-xylulose 5-phosphate. Glutamate 227 contacts Mn(2+).

The protein belongs to the DXR family. The cofactor is Mg(2+). It depends on Mn(2+) as a cofactor.

The enzyme catalyses 2-C-methyl-D-erythritol 4-phosphate + NADP(+) = 1-deoxy-D-xylulose 5-phosphate + NADPH + H(+). It functions in the pathway isoprenoid biosynthesis; isopentenyl diphosphate biosynthesis via DXP pathway; isopentenyl diphosphate from 1-deoxy-D-xylulose 5-phosphate: step 1/6. In terms of biological role, catalyzes the NADPH-dependent rearrangement and reduction of 1-deoxy-D-xylulose-5-phosphate (DXP) to 2-C-methyl-D-erythritol 4-phosphate (MEP). In Allorhizobium ampelinum (strain ATCC BAA-846 / DSM 112012 / S4) (Agrobacterium vitis (strain S4)), this protein is 1-deoxy-D-xylulose 5-phosphate reductoisomerase.